A 398-amino-acid polypeptide reads, in one-letter code: Methionine import ATP-binding protein MetN 2 (398 aa).

The 240-residue stretch at 43–282 folds into the ABC transporter domain; sequence VSLEQVGKVF…PRHGATRALL (240 aa). An ATP-binding site is contributed by 79–86; it reads GRSGAGKS.

Belongs to the ABC transporter superfamily. Methionine importer (TC 3.A.1.24) family. The complex is composed of two ATP-binding proteins (MetN), two transmembrane proteins (MetI) and a solute-binding protein (MetQ).

Its subcellular location is the cell inner membrane. It catalyses the reaction L-methionine(out) + ATP + H2O = L-methionine(in) + ADP + phosphate + H(+). It carries out the reaction D-methionine(out) + ATP + H2O = D-methionine(in) + ADP + phosphate + H(+). Part of the ABC transporter complex MetNIQ involved in methionine import. Responsible for energy coupling to the transport system. The polypeptide is Methionine import ATP-binding protein MetN 2 (Burkholderia lata (strain ATCC 17760 / DSM 23089 / LMG 22485 / NCIMB 9086 / R18194 / 383)).